Reading from the N-terminus, the 504-residue chain is Probable alpha-L-arabinofuranosidase C (504 aa).

N-linked (GlcNAc...) asparagine glycosylation is found at asparagine 152, asparagine 181, and asparagine 269.

This sequence belongs to the glycosyl hydrolase 51 family.

The protein localises to the secreted. The enzyme catalyses Hydrolysis of terminal non-reducing alpha-L-arabinofuranoside residues in alpha-L-arabinosides.. The protein operates within glycan metabolism; L-arabinan degradation. Its function is as follows. Alpha-L-arabinofuranosidase involved in the degradation of arabinoxylan, a major component of plant hemicellulose. Acts only on small linear 1,5-alpha-linked L-arabinofuranosyl oligosaccharides. This chain is Probable alpha-L-arabinofuranosidase C (abfC), found in Aspergillus flavus (strain ATCC 200026 / FGSC A1120 / IAM 13836 / NRRL 3357 / JCM 12722 / SRRC 167).